The following is a 1323-amino-acid chain: ABC transporter gloK (1323 aa).

The next 7 helical transmembrane spans lie at 6-26 (AIAS…TLEA), 102-122 (PHAL…AGIL), 138-158 (VAYG…VMST), 217-237 (IWAS…RLGV), 240-260 (VAAV…VFGF), 325-345 (LLVG…VFAF), and 359-379 (PLLA…GQAV). One can recognise an ABC transmembrane type-1 1 domain in the interval 142–380 (LIAAYAIVYI…IFSLLGQAVS (239 aa)). Residues 471-697 (IRDCSACWSK…SSYLESLGTR (227 aa)) enclose the ABC transporter 1 domain. ATP is bound at residue 503–510 (GPIGSGKS). Helical transmembrane passes span 748 to 768 (GWVT…GLVF), 795 to 815 (YALW…WLMI), 821 to 841 (AAIQ…LVYF), 859 to 879 (LIDM…LSCI), 891 to 910 (YVAA…QLFY), 976 to 996 (LNLT…SIAL), and 1006 to 1026 (IGVA…LVYT). The ABC transmembrane type-1 2 domain maps to 752 to 1031 (WWVFVLLCSG…TLVYTWTSLE (280 aa)). Positions 1069-1300 (IRFQSVSAAY…PSFFASLLKA (232 aa)) constitute an ABC transporter 2 domain. Position 1103 to 1110 (1103 to 1110 (GRTGSGKS)) interacts with ATP.

This sequence belongs to the ABC transporter superfamily. ABCC family. Conjugate transporter (TC 3.A.1.208) subfamily.

The protein localises to the cell membrane. In terms of biological role, 3-isopropylmalate dehydratase large subunit; part of the gene cluster that mediates the biosynthesis of pneumocandins, lipohexapeptides of the echinocandin family that prevent fungal cell wall formation by non-competitive inhibition of beta-1,3-glucan synthase. Possibly secretes antifungal pneumocandins, thus avoiding of intracellular accumulation and ameliorating the toxicity to the producing cells. In Glarea lozoyensis (strain ATCC 20868 / MF5171), this protein is ABC transporter gloK.